Consider the following 1482-residue polypeptide: Calcium-dependent protein kinase 6 (1482 aa).

Disordered stretches follow at residues 250-320 (TNNY…IRPN) and 739-760 (SENF…DDSN). Residues 254–264 (AHDNNQDSNSY) are compositionally biased toward polar residues. The span at 277 to 301 (EEDNDTGDTYADNEEDEDNRDDNDD) shows a compositional bias: acidic residues. Residues 302 to 318 (YSQYNQCEVESDTNQIR) show a composition bias toward polar residues. Low complexity predominate over residues 739–748 (SENFSNNFND). Residues 749-760 (NKQKSLKNDDSN) show a composition bias toward basic and acidic residues. EF-hand domains follow at residues 931–966 (IFER…LCYN) and 972–1007 (VDKK…LLKQ). Positions 985, 987, 989, 991, and 996 each coordinate Ca(2+). A Protein kinase domain is found at 1043-1295 (LSFKKILGCG…AAVLLHHPWF (253 aa)). ATP contacts are provided by residues 1049–1057 (LGCGAFGEV) and lysine 1072. Aspartate 1162 (proton acceptor) is an active-site residue. EF-hand domains are found at residues 1338-1373 (NHVK…AGVK), 1376-1406 (DINR…RWKN), 1407-1442 (IDST…NGVN), and 1468-1482 (KISF…LSTF). 5 residues coordinate Ca(2+): aspartate 1351, asparagine 1353, asparagine 1355, serine 1357, and glutamate 1362. Ca(2+)-binding residues include aspartate 1420, aspartate 1422, aspartate 1424, tyrosine 1426, and aspartate 1431.

It belongs to the protein kinase superfamily. Ser/Thr protein kinase family. CDPK subfamily. It depends on Mg(2+) as a cofactor.

It catalyses the reaction L-seryl-[protein] + ATP = O-phospho-L-seryl-[protein] + ADP + H(+). The catalysed reaction is L-threonyl-[protein] + ATP = O-phospho-L-threonyl-[protein] + ADP + H(+). Activated by calcium. Its function is as follows. Calcium-dependent protein kinase which acts as a sensor and effector of intracellular Ca(2+) levels. In sporozoites, probably involved in the secretion of the cysteine protease that cleaves circumsporozoite protein CSP, thereby exposing CSP TSR domain, which binds with high affinity to highly sulfated heparan sulfate proteoglycans (HSPGs), resulting in productive invasion of the host hepatocytes. In Plasmodium berghei (strain Anka), this protein is Calcium-dependent protein kinase 6.